Consider the following 1006-residue polypeptide: MDLDSSMVPENDQDPIATSENQSPMEEKEEASEQQTGSESESASLTPSLPPPSQQQQQQQQQPQVTAVVGPRCAPTYSVVNAIIEKKEDGPGPRCGHTLTAVPAVGEEGTSSYIGPRLILFGGATALEGNSGGTGTPTSAGSAGIRLAGATADVHCYDVLSNKWSRLTPYGEPPSPRAAHVATAVGTMVVIQGGIGPAGLSAEDLHVLDLTQQRPRWHRVVVQGPGPGPRYGHVMALVGQRYLMAIGGNDGKRPLADVWALDTAAKPYEWRKLEPEGEGPPPCMYATASARSDGLLLLCGGRDANSVPLASAYGLAKHRDGRWEWAIAPGVSPSARYQHAAVFVNARLHVSGGALGGGRMVEDSSSVAVLDTAAGVWCDTKSVVTSPRTGRYSADAAGGDASVELTRRCRHAAAAVGDLIFIYGGLRGGVLLDDLLVAEDLAAAETTSAASHAAAAAAATNTPPGRSPGRYGFSDERTGELPESAPDAVVLGSPVAPPVNGDMYTDISTENAMVPGIRRTSKGVEYLVEASAAEAEAISATLAAAKARQVNGEVELPDRDRGAEATPSGKPSLSLIKPDSAVPNSVIPAGVRLHHRAVVVAAETGGALGGMVRQLSIDQFENEGRRVSYGTPESATAARKLLDRQMSINSVPKKVVAHLLKPRGWKPPVRRQFFLDCNEIADLCDSAERIFSSEPTVLQLKAPIKIFGDLHGQFGDLMRLFDEYGSPSTAGDISYIDYLFLGDYVDRGQHSLETITLLLALKVEYQHNVHLIRGNHEAADINALFGFRIECIERMGERDGIWVWHRINRLFNWLPLAALIEKKIICMHGGIGRSINHVEQIENIQRPITMEAGSIVLMDLLWSDPTENDSVEGLRPNARGPGLVTFGPDRVMEFCNNNDLQLIVRAHECVMDGFERFAQGHLITLFSATNYCGTANNAGAILVLGRDLVVVPKLIHPLPPAITSPETSPERHIEDTWMQELNVNRPPTPTRGRPQNPNDRGSLAWI.

Residues 1–67 (MDLDSSMVPE…QQQQQPQVTA (67 aa)) are disordered. 2 stretches are compositionally biased toward low complexity: residues 38–47 (SESESASLTP) and 54–67 (QQQQ…QVTA). Kelch repeat units follow at residues 138–184 (TSAG…VATA), 242–290 (YLMA…TASA), 295–345 (LLLL…VFVN), 351–398 (SGGA…DAAG), and 419–465 (LIFI…TPPG). Disordered regions lie at residues 454-494 (AAAA…LGSP) and 552-579 (GEVE…IKPD). At Ser616 the chain carries Phosphoserine. Asp709, His711, Asp743, and Asn775 together coordinate Mn(2+). His776 functions as the Proton donor in the catalytic mechanism. Mn(2+)-binding residues include His828 and His907. Ser964 carries the phosphoserine modification. A disordered region spans residues 982–1006 (NVNRPPTPTRGRPQNPNDRGSLAWI).

It belongs to the PPP phosphatase family. BSU subfamily. Mn(2+) serves as cofactor. Expressed throughout the plant, with a higher level in younger parts.

It localises to the nucleus. The enzyme catalyses O-phospho-L-seryl-[protein] + H2O = L-seryl-[protein] + phosphate. It catalyses the reaction O-phospho-L-threonyl-[protein] + H2O = L-threonyl-[protein] + phosphate. Functionally, phosphatase involved in elongation process, probably by acting as a regulator of brassinolide signaling. This chain is Serine/threonine-protein phosphatase BSL3 (BSL3), found in Arabidopsis thaliana (Mouse-ear cress).